The following is a 1282-amino-acid chain: Crescerin-like protein che-12 (1282 aa).

TOG regions lie at residues 33–240 (DFDT…EHTE) and 268–515 (PSLV…MDSF). 8 HEAT repeats span residues 59–96 (QKKG…TFGS), 100–137 (YCMC…LKPE), 162–209 (ELHH…FIGN), 261–300 (RLRF…QITP), 308–345 (PHLH…HLKG), 349–386 (AHIQ…NINP), 388–421 (TVGG…TISP), and 424–461 (FNLQ…LLNG). Residues 566–714 (IQQQGQAEKP…RSFDDRPAKA (149 aa)) are disordered. Composition is skewed to low complexity over residues 575–592 (PSFS…HQAQ) and 633–644 (SAASNPNSSTSS). Residues 702-712 (DPPRSFDDRPA) are compositionally biased toward basic and acidic residues. TOG stretches follow at residues 800 to 1022 (NMSV…ANVE) and 1066 to 1282 (TELL…ALIR). HEAT repeat units lie at residues 838–875 (DNLK…NLNS), 879–917 (SEME…AATA), 919–953 (KALQ…IQGS), 961–998 (NALS…DPNF), 1095–1132 (ASDT…SMAK), 1177–1214 (IEPV…LAYK), and 1219–1258 (QVEV…LIGE).

The protein belongs to the Crescerin family. Detected in a subset of amphid neurons that lack wing- or finger-like ciliary extensions. Likewise, detected in phasmid neurons.

The protein resides in the cell projection. It localises to the cilium. The protein localises to the perikaryon. Its subcellular location is the dendrite. Its function is as follows. Required for normal structure and function of sensory cilia on amphid neurons, especially for the formation of distal ciliary structures, but is less important for normal assembly of middle and basal ciliary structures. Plays a role in the organization of axoneme microtubule bundles in sensory cilia. Required for normal structure and function of the ASER neuron that mediates attraction to NaCl. Required for normal chemotaxis to NaCl. Required for normal avoidance response to high osmolarity. In contrast, is not required for normal chemotaxis to isoamyl alcohol. Does not play a role in intraflagella transport (IFT). Promotes dauer formation in response to pheromones such as the ascarosides ascr#2, ascr#3, ascr#5, ascr#8 and icas#9. This chain is Crescerin-like protein che-12, found in Caenorhabditis elegans.